A 151-amino-acid chain; its full sequence is UPF0756 membrane protein LBA0919 (151 aa).

4 helical membrane passes run 4–24 (WLFL…SLII), 52–72 (WGVT…QIGF), 78–98 (TFKT…AVLS), and 115–135 (LVLG…GPVI).

Belongs to the UPF0756 family.

Its subcellular location is the cell membrane. This Lactobacillus acidophilus (strain ATCC 700396 / NCK56 / N2 / NCFM) protein is UPF0756 membrane protein LBA0919.